The sequence spans 484 residues: Serine hydroxymethyltransferase, cytosolic (484 aa).

Residue Ala2 is modified to N-acetylalanine. Residue Asn6 is modified to Deamidated asparagine; alternate. The isoaspartyl glycine isopeptide (Asn-Gly); alternate cross-link spans 6–7 (NG). The active-site Nucleophile is the Cys204. His256 serves as the catalytic Proton donor. At Lys257 the chain carries N6-(pyridoxal phosphate)lysine.

The protein belongs to the SHMT family. Homotetramer. Identified in complex with ABRAXAS2 and the other subunits of the BRISC complex, at least composed of ABRAXAS2, BRCC3/BRCC36, BABAM2 and BABAM1/NBA1. Pyridoxal 5'-phosphate is required as a cofactor. Deamidation of asparagine produces alternatively aspartate or isoaspartate, which in turn can be converted to aspartate through carboxylmethylation/demethylation.

It is found in the cytoplasm. The catalysed reaction is (6R)-5,10-methylene-5,6,7,8-tetrahydrofolate + glycine + H2O = (6S)-5,6,7,8-tetrahydrofolate + L-serine. Its pathway is one-carbon metabolism; tetrahydrofolate interconversion. In terms of biological role, interconversion of serine and glycine. The protein is Serine hydroxymethyltransferase, cytosolic (SHMT1) of Oryctolagus cuniculus (Rabbit).